Consider the following 601-residue polypeptide: NADH-quinone oxidoreductase subunit C/D (601 aa).

The NADH dehydrogenase I subunit C stretch occupies residues 1 to 191; it reads MKLTREFPSN…DPFMLDAVKQ (191 aa). The interval 215-601 is NADH dehydrogenase I subunit D; sequence DYMFLNLGPN…IDFVMSDVDR (387 aa).

It in the N-terminal section; belongs to the complex I 30 kDa subunit family. In the C-terminal section; belongs to the complex I 49 kDa subunit family. In terms of assembly, NDH-1 is composed of 13 different subunits. Subunits NuoB, CD, E, F, and G constitute the peripheral sector of the complex.

The protein localises to the cell inner membrane. It catalyses the reaction a quinone + NADH + 5 H(+)(in) = a quinol + NAD(+) + 4 H(+)(out). Its function is as follows. NDH-1 shuttles electrons from NADH, via FMN and iron-sulfur (Fe-S) centers, to quinones in the respiratory chain. The immediate electron acceptor for the enzyme in this species is believed to be ubiquinone. Couples the redox reaction to proton translocation (for every two electrons transferred, four hydrogen ions are translocated across the cytoplasmic membrane), and thus conserves the redox energy in a proton gradient. The polypeptide is NADH-quinone oxidoreductase subunit C/D (Aeromonas hydrophila subsp. hydrophila (strain ATCC 7966 / DSM 30187 / BCRC 13018 / CCUG 14551 / JCM 1027 / KCTC 2358 / NCIMB 9240 / NCTC 8049)).